A 120-amino-acid chain; its full sequence is Putative gamma-glutamylcyclotransferase MJ1514 (120 aa).

Residue 7 to 10 participates in substrate binding; the sequence is YGSL. Catalysis depends on E74, which acts as the Proton acceptor.

This sequence belongs to the gamma-glutamylcyclotransferase family.

Putative gamma-glutamylcyclotransferase. This chain is Putative gamma-glutamylcyclotransferase MJ1514, found in Methanocaldococcus jannaschii (strain ATCC 43067 / DSM 2661 / JAL-1 / JCM 10045 / NBRC 100440) (Methanococcus jannaschii).